Consider the following 104-residue polypeptide: Large ribosomal subunit protein uL24 (104 aa).

It belongs to the universal ribosomal protein uL24 family. Part of the 50S ribosomal subunit.

In terms of biological role, one of two assembly initiator proteins, it binds directly to the 5'-end of the 23S rRNA, where it nucleates assembly of the 50S subunit. Functionally, one of the proteins that surrounds the polypeptide exit tunnel on the outside of the subunit. The sequence is that of Large ribosomal subunit protein uL24 from Bradyrhizobium sp. (strain BTAi1 / ATCC BAA-1182).